Consider the following 213-residue polypeptide: ATP-dependent dethiobiotin synthetase BioD (213 aa).

13–18 is a binding site for ATP; sequence GIGKTV. A Mg(2+)-binding site is contributed by T17. K33 is an active-site residue. E100 serves as a coordination point for Mg(2+). ATP is bound by residues 100-103 and 184-186; these read EGAG and PHL.

The protein belongs to the dethiobiotin synthetase family. As to quaternary structure, homodimer. It depends on Mg(2+) as a cofactor.

The protein resides in the cytoplasm. The enzyme catalyses (7R,8S)-7,8-diammoniononanoate + CO2 + ATP = (4R,5S)-dethiobiotin + ADP + phosphate + 3 H(+). It participates in cofactor biosynthesis; biotin biosynthesis; biotin from 7,8-diaminononanoate: step 1/2. In terms of biological role, catalyzes a mechanistically unusual reaction, the ATP-dependent insertion of CO2 between the N7 and N8 nitrogen atoms of 7,8-diaminopelargonic acid (DAPA, also called 7,8-diammoniononanoate) to form a ureido ring. The protein is ATP-dependent dethiobiotin synthetase BioD of Rhodopseudomonas palustris (strain BisA53).